The following is a 133-amino-acid chain: Holo-[acyl-carrier-protein] synthase (133 aa).

Residues Asp8 and Glu57 each coordinate Mg(2+).

This sequence belongs to the P-Pant transferase superfamily. AcpS family. It depends on Mg(2+) as a cofactor.

Its subcellular location is the cytoplasm. The catalysed reaction is apo-[ACP] + CoA = holo-[ACP] + adenosine 3',5'-bisphosphate + H(+). Functionally, transfers the 4'-phosphopantetheine moiety from coenzyme A to a Ser of acyl-carrier-protein. The protein is Holo-[acyl-carrier-protein] synthase of Bartonella henselae (strain ATCC 49882 / DSM 28221 / CCUG 30454 / Houston 1) (Rochalimaea henselae).